The following is a 509-amino-acid chain: L-arabinose isomerase (509 aa).

4 residues coordinate Mn(2+): Glu313, Glu340, His357, and His456.

Belongs to the arabinose isomerase family. The cofactor is Mn(2+).

It carries out the reaction beta-L-arabinopyranose = L-ribulose. It functions in the pathway carbohydrate degradation; L-arabinose degradation via L-ribulose; D-xylulose 5-phosphate from L-arabinose (bacterial route): step 1/3. In terms of biological role, catalyzes the conversion of L-arabinose to L-ribulose. This is L-arabinose isomerase from Phocaeicola vulgatus (strain ATCC 8482 / DSM 1447 / JCM 5826 / CCUG 4940 / NBRC 14291 / NCTC 11154) (Bacteroides vulgatus).